The chain runs to 508 residues: GMP synthase [glutamine-hydrolyzing] (508 aa).

A Glutamine amidotransferase type-1 domain is found at 1–189 (MILVLDFGSQ…ALLVCDCEKT (189 aa)). Residue Cys78 is the Nucleophile of the active site. Catalysis depends on residues His163 and Glu165. Residues 190–383 (WGMQHFAQRE…LGISQDFLMR (194 aa)) enclose the GMPS ATP-PPase domain. 217 to 223 (SGGVDST) contributes to the ATP binding site.

In terms of assembly, homodimer.

It carries out the reaction XMP + L-glutamine + ATP + H2O = GMP + L-glutamate + AMP + diphosphate + 2 H(+). It participates in purine metabolism; GMP biosynthesis; GMP from XMP (L-Gln route): step 1/1. Catalyzes the synthesis of GMP from XMP. The polypeptide is GMP synthase [glutamine-hydrolyzing] (Helicobacter pylori (strain HPAG1)).